Reading from the N-terminus, the 342-residue chain is Replication factor C subunit 4 (342 aa).

Residues V24, V36, 61 to 68 (GMPGIGKT), N157, and R215 contribute to the ATP site.

The protein belongs to the activator 1 small subunits family. In terms of assembly, heteropentamer of subunits rfc1, rfc2, rfc3, rfc4 and rfc5 that forms a complex (RFC) with PCNA in the presence of ATP. Two other complexes exist where rfc1 can be replaced by either ctf18 or elg1 to form the ctf18-RFC or the elg1-RFC complexes respectively.

The protein resides in the nucleus. In terms of biological role, the elongation of primed DNA templates by DNA polymerase delta and epsilon requires the action of the accessory proteins PCNA and activator 1. The protein is Replication factor C subunit 4 (rfc4) of Schizosaccharomyces pombe (strain 972 / ATCC 24843) (Fission yeast).